We begin with the raw amino-acid sequence, 364 residues long: Aminomethyltransferase (364 aa).

It belongs to the GcvT family. The glycine cleavage system is composed of four proteins: P, T, L and H.

It carries out the reaction N(6)-[(R)-S(8)-aminomethyldihydrolipoyl]-L-lysyl-[protein] + (6S)-5,6,7,8-tetrahydrofolate = N(6)-[(R)-dihydrolipoyl]-L-lysyl-[protein] + (6R)-5,10-methylene-5,6,7,8-tetrahydrofolate + NH4(+). Its function is as follows. The glycine cleavage system catalyzes the degradation of glycine. The protein is Aminomethyltransferase of Salmonella enteritidis PT4 (strain P125109).